The primary structure comprises 329 residues: Phosphoenolpyruvate transferase (329 aa).

A 7,8-didemethyl-8-hydroxy-5-deazariboflavin-binding site is contributed by Asp61.

It belongs to the CofD family. In terms of assembly, homodimer. Requires Mg(2+) as cofactor.

It catalyses the reaction enolpyruvoyl-2-diphospho-5'-guanosine + 7,8-didemethyl-8-hydroxy-5-deazariboflavin = dehydro coenzyme F420-0 + GMP + H(+). Its pathway is cofactor biosynthesis; coenzyme F420 biosynthesis. Its function is as follows. Catalyzes the transfer of the phosphoenolpyruvate moiety from enoylpyruvoyl-2-diphospho-5'-guanosine (EPPG) to 7,8-didemethyl-8-hydroxy-5-deazariboflavin (FO) with the formation of dehydro coenzyme F420-0 and GMP. This Mycobacterium ulcerans (strain Agy99) protein is Phosphoenolpyruvate transferase.